A 1132-amino-acid chain; its full sequence is Rho GTPase-activating protein gacE (1132 aa).

In terms of domain architecture, Rho-GAP spans 76-262; that stretch reads LEMNKILKSE…FLISNYLNVF (187 aa). Disordered regions lie at residues 279–354 and 472–517; these read NELL…SSPI and NSTT…SLIN. Low complexity predominate over residues 281-301; that stretch reads LLNNNNNNNNVIMPTTTTTTT. Over residues 302 to 311 the composition is skewed to polar residues; it reads SASSSILPTD. Low complexity-rich tracts occupy residues 328–354, 473–498, and 507–517; these read SIPLSSIGSSSTSPIISPSSSSSSSPI, STTTTTTSTSTSTSTSTSTSTSSTTT, and SNSASNNSLIN.

Its subcellular location is the cytoplasm. In terms of biological role, rho GTPase-activating protein involved in the signal transduction pathway. This is Rho GTPase-activating protein gacE (gacE) from Dictyostelium discoideum (Social amoeba).